The primary structure comprises 487 residues: MTELFIDGAWVAGSGPAFASRNPGTDDIAWQGASASAADVDRAIMSARRAFADWSALDFESRCAIAKRFAALLNERKEALAAAIGRETGKPLWEARTEVAAMAAKVGISIQAYQERTGEKRQDMADGVAVLRHRPHGVVAVFGPYNFPGHLPNGHIVPALIAGNTVVFKPSELAPGVAQATVEVWKDAGLPAGVLNLVQGEKDTGIALANHRQIDGLFFTGSSDTGTLLHKQFGGRPEIVLALEMGGNNPLVIGEVEDIDAAVHHTIQSAFLSAGQRCTCARRIFVPQGAFGDRFLARFVDVTSKITADVFDADPQPFMGAVISARAAAKLVDAQSRLIEQGAQPIIAMKQRDPRLGFVNAAIVDVTNVANLPDEEHFGPLAQIVRYADFDEAIARANDTAFGLSAGLLADDARAWEHFRRTIRAGIVNWNRPTNGASSAAPFGGTGRSGNHRPSAYYAADYCAYPMASVESAQLTLPASLSPGLHF.

221–226 (GSSDTG) contacts NAD(+). Residues glutamate 244 and cysteine 278 contribute to the active site.

This sequence belongs to the aldehyde dehydrogenase family. AstD subfamily.

The catalysed reaction is N-succinyl-L-glutamate 5-semialdehyde + NAD(+) + H2O = N-succinyl-L-glutamate + NADH + 2 H(+). The protein operates within amino-acid degradation; L-arginine degradation via AST pathway; L-glutamate and succinate from L-arginine: step 4/5. Functionally, catalyzes the NAD-dependent reduction of succinylglutamate semialdehyde into succinylglutamate. This chain is N-succinylglutamate 5-semialdehyde dehydrogenase, found in Burkholderia multivorans (strain ATCC 17616 / 249).